The primary structure comprises 548 residues: Sesquiterpene synthase 12 (548 aa).

The Mg(2+) site is built by Asp-299, Asp-303, Asp-444, and Glu-452. The DDXXD motif motif lies at 299–303 (DDTFD).

Belongs to the terpene synthase family. Tpsa subfamily. Mg(2+) is required as a cofactor. Requires Mn(2+) as cofactor. In terms of tissue distribution, mostly expressed in leaves, to a lower extent in stems, trichomes, flowers and roots and, at low levels, in fruits.

The catalysed reaction is (2E,6E)-farnesyl diphosphate = alpha-humulene + diphosphate. It catalyses the reaction (2E,6E)-farnesyl diphosphate = (-)-(E)-beta-caryophyllene + diphosphate. The enzyme catalyses (2Z,6Z)-farnesyl diphosphate = beta-bisabolene + diphosphate. It carries out the reaction (2E)-geranyl diphosphate = terpinolene + diphosphate. The catalysed reaction is (2E)-geranyl diphosphate = limonene + diphosphate. It catalyses the reaction (2E)-geranyl diphosphate = beta-myrcene + diphosphate. The enzyme catalyses (2E)-geranyl diphosphate = (E)-beta-ocimene + diphosphate. It carries out the reaction (2Z,6Z)-farnesyl diphosphate = gamma-curcumene + diphosphate. The catalysed reaction is (2Z,6Z)-farnesyl diphosphate = (Z)-gamma-bisabolene + diphosphate. The protein operates within secondary metabolite biosynthesis; terpenoid biosynthesis. Sesquiterpene synthase involved in the biosynthesis of volatile compounds. Mediates the conversion of (2E,6E)-farnesyl diphosphate (FPP) into (1E,4E,8E)-alpha-humulene and (-)-(E)-beta-caryophyllene, and of (2Z,6Z)-farnesyl diphosphate ((ZZ)-FPP) into beta-bisabolene, gamma-curcumene and (Z)-gamma-bisabolene. Can act with a low efficiency as a monoterpene synthase with geranyl diphosphate (GPP) as substrate, thus producing beta-myrcene, (E)-beta-ocimene, limonene and terpinolene. This is Sesquiterpene synthase 12 from Solanum lycopersicum (Tomato).